A 221-amino-acid polypeptide reads, in one-letter code: Deoxyribose-phosphate aldolase (221 aa).

Asp90 serves as the catalytic Proton donor/acceptor. Residue Lys152 is the Schiff-base intermediate with acetaldehyde of the active site. Lys181 serves as the catalytic Proton donor/acceptor.

Belongs to the DeoC/FbaB aldolase family. DeoC type 1 subfamily.

It is found in the cytoplasm. The enzyme catalyses 2-deoxy-D-ribose 5-phosphate = D-glyceraldehyde 3-phosphate + acetaldehyde. Its pathway is carbohydrate degradation; 2-deoxy-D-ribose 1-phosphate degradation; D-glyceraldehyde 3-phosphate and acetaldehyde from 2-deoxy-alpha-D-ribose 1-phosphate: step 2/2. Catalyzes a reversible aldol reaction between acetaldehyde and D-glyceraldehyde 3-phosphate to generate 2-deoxy-D-ribose 5-phosphate. In Exiguobacterium sibiricum (strain DSM 17290 / CCUG 55495 / CIP 109462 / JCM 13490 / 255-15), this protein is Deoxyribose-phosphate aldolase.